A 292-amino-acid chain; its full sequence is 31 kDa ribonucleoprotein, chloroplastic (292 aa).

In terms of domain architecture, RRM 1 spans 88–166; sequence LKLFVGNLPF…RAIRVNAGPA (79 aa). The disordered stretch occupies residues 165–203; the sequence is PAPAKRENSSFGGGRGGNSSYGGGRDGNSSFGGARGGRS. The interval 167-207 is linker (Gly-rich); that stretch reads PAKRENSSFGGGRGGNSSYGGGRDGNSSFGGARGGRSVDSS. Positions 175–190 are enriched in gly residues; sequence FGGGRGGNSSYGGGRD. Positions 208–286 constitute an RRM 2 domain; that stretch reads NRVYVGNLSW…RSIRVSAAEE (79 aa).

As to expression, expressed at high levels in the leaves and seedlings, and lower levels are seen in the stems and roots.

It localises to the plastid. Its subcellular location is the chloroplast. The sequence is that of 31 kDa ribonucleoprotein, chloroplastic from Nicotiana plumbaginifolia (Leadwort-leaved tobacco).